A 1839-amino-acid chain; its full sequence is Adenylate cyclase (1839 aa).

Disordered stretches follow at residues 1-21, 43-87, 126-245, 272-315, 332-388, and 400-468; these read MSSP…PQIE, ITTH…PRFS, TSLL…PIVS, KNTE…QWTA, KRKA…DSND, and ESSG…SFSK. Residues 165–211 are compositionally biased toward polar residues; it reads SQSNESRGTRSSIFFPSTSNSRRGSATSTMTSGSRSSHPPDTPPITS. Residues 212–221 show a composition bias toward low complexity; it reads QQQEQQYDQQ. Positions 222 to 233 are enriched in basic and acidic residues; sequence RQQRPETREQEQ. A compositionally biased stretch (basic residues) spans 332 to 355; the sequence is KRKAKHHHHYHHPQHPRPPHRKHY. The segment covering 361–376 has biased composition (basic and acidic residues); the sequence is PIEDKAVVEKEQEPPE. Low complexity predominate over residues 407–428; the sequence is SASTQSVSSFSSGATGASGATG. One can recognise a Ras-associating domain in the interval 494-574; the sequence is RRYAIRIFNI…LNGYLKSDPL (81 aa). LRR repeat units lie at residues 632–655, 659–679, 681–702, 704–726, 727–748, 750–771, 773–794, 795–816, 817–834, 835–856, 858–879, 882–903, 905–926, 928–950, 951–971, 982–1004, 1006–1027, 1028–1048, 1051–1073, 1074–1096, 1103–1124, and 1135–1160; these read TSDI…FIES, LSSL…VTDA, KLVS…IFKL, NLTI…SKLK, NLQL…INSC, NLLQ…INQL, KLAK…SQMK, NLRT…APNL, QNLF…DDLT, RLRT…GNYM, NMTS…LLSK, RLEK…INKL, RLIY…ISDL, SLKS…EDLE, LTSL…PAKF, SLLF…VNTF, NLKT…KLQN, LTEL…AVQH, SLKV…SQLS, RLSV…HYDW, DLKY…LDPE, and LKQL…SVSI. Positions 1173–1439 constitute a PPM-type phosphatase domain; that stretch reads RYGVADTLGQ…DNITILCVSL (267 aa). A Guanylate cyclase domain is found at 1483-1620; it reads AIVFTDIKNS…PVVNKAARVS (138 aa). Mg(2+) is bound by residues Asp1488 and Asp1531.

This sequence belongs to the adenylyl cyclase class-3 family. Mg(2+) serves as cofactor.

The enzyme catalyses ATP = 3',5'-cyclic AMP + diphosphate. Functionally, plays essential roles in regulation of cellular metabolism by catalyzing the synthesis of a second messenger, cAMP. This Lachancea kluyveri (Yeast) protein is Adenylate cyclase (CYR1).